A 148-amino-acid polypeptide reads, in one-letter code: Large ribosomal subunit protein bL9 (148 aa).

It belongs to the bacterial ribosomal protein bL9 family.

Binds to the 23S rRNA. The polypeptide is Large ribosomal subunit protein bL9 (Leptospira biflexa serovar Patoc (strain Patoc 1 / Ames)).